Consider the following 150-residue polypeptide: Protein A151R (150 aa).

Belongs to the asfivirus A151R family. As to quaternary structure, monomer. Homodimer. Interacts with protein B119L. Interacts with membrane protein E248R. Zn(2+) serves as cofactor.

Its function is as follows. May participate in a redox cascade for the formation of disulfide bonds in viral proteins. In African swine fever virus (isolate Pig/Kenya/KEN-50/1950) (ASFV), this protein is Protein A151R.